The sequence spans 246 residues: Phosducin (246 aa).

Residues 1-14 (MEEAASQSLEEDFE) show a composition bias toward acidic residues. Residues 1 to 70 (MEEAASQSLE…DKDSKERMSR (70 aa)) form a disordered region. A Phosducin domain is found at 1–246 (MEEAASQSLE…QTNTEDEDIE (246 aa)). Residues 58–69 (SRDDKDSKERMS) show a composition bias toward basic and acidic residues. Serine 73 is modified (phosphoserine; by PKA). The tract at residues 111-246 (YGFVYELETG…QTNTEDEDIE (136 aa)) is thioredoxin fold.

This sequence belongs to the phosducin family. In terms of assembly, interacts with CRX. Forms a complex with the beta and gamma subunits of the GTP-binding protein, transducin. Light-induced changes in cyclic nucleotide levels modulate the phosphorylation of this protein by cAMP kinase.

It is found in the cytoplasm. Its subcellular location is the cytosol. The protein resides in the nucleus. The protein localises to the cell projection. It localises to the cilium. It is found in the photoreceptor outer segment. Its subcellular location is the photoreceptor inner segment. In terms of biological role, inhibits the transcriptional activation activity of the cone-rod homeobox CRX. May participate in the regulation of visual phototransduction or in the integration of photoreceptor metabolism. This is Phosducin (Pdc) from Rattus norvegicus (Rat).